Here is a 156-residue protein sequence, read N- to C-terminus: Ubiquitin-like protein 4A (156 aa).

The region spanning 1-76 is the Ubiquitin-like domain; that stretch reads MILTVKPLQG…LNLVIRPVGE (76 aa).

As to quaternary structure, component of the bag6/bat3 complex.

The protein localises to the cytoplasm. It is found in the cytosol. The protein resides in the nucleus. As part of a cytosolic protein quality control complex, the bag6/bat3 complex, maintains misfolded and hydrophobic patches-containing proteins in a soluble state and participates in their proper delivery to the endoplasmic reticulum or alternatively can promote their sorting to the proteasome where they undergo degradation. The bag6/bat3 complex is involved in the post-translational delivery of tail-anchored/type II transmembrane proteins to the endoplasmic reticulum membrane. Similarly, the bag6/bat3 complex also functions as a sorting platform for proteins of the secretory pathway that are mislocalized to the cytosol either delivering them to the proteasome for degradation or to the endoplasmic reticulum. The bag6/bat3 complex also plays a role in the endoplasmic reticulum-associated degradation (ERAD), a quality control mechanism that eliminates unwanted proteins of the endoplasmic reticulum through their retrotranslocation to the cytosol and their targeting to the proteasome. It maintains these retrotranslocated proteins in an unfolded yet soluble state condition in the cytosol to ensure their proper delivery to the proteasome. This Anoplopoma fimbria (Sablefish) protein is Ubiquitin-like protein 4A (ubl4a).